The sequence spans 301 residues: Acetyl-coenzyme A carboxylase carboxyl transferase subunit beta (301 aa).

In terms of domain architecture, CoA carboxyltransferase N-terminal spans 25-294; that stretch reads LWIKDPSTGE…NSDAPEHEKT (270 aa). Residues 282 to 301 form a disordered region; sequence QPGNSDAPEHEKTEATDKAA. Positions 288-301 are enriched in basic and acidic residues; it reads APEHEKTEATDKAA.

The protein belongs to the AccD/PCCB family. As to quaternary structure, acetyl-CoA carboxylase is a heterohexamer composed of biotin carboxyl carrier protein (AccB), biotin carboxylase (AccC) and two subunits each of ACCase subunit alpha (AccA) and ACCase subunit beta (AccD).

It localises to the cytoplasm. It catalyses the reaction N(6)-carboxybiotinyl-L-lysyl-[protein] + acetyl-CoA = N(6)-biotinyl-L-lysyl-[protein] + malonyl-CoA. Its pathway is lipid metabolism; malonyl-CoA biosynthesis; malonyl-CoA from acetyl-CoA: step 1/1. Component of the acetyl coenzyme A carboxylase (ACC) complex. Biotin carboxylase (BC) catalyzes the carboxylation of biotin on its carrier protein (BCCP) and then the CO(2) group is transferred by the transcarboxylase to acetyl-CoA to form malonyl-CoA. This Brucella anthropi (strain ATCC 49188 / DSM 6882 / CCUG 24695 / JCM 21032 / LMG 3331 / NBRC 15819 / NCTC 12168 / Alc 37) (Ochrobactrum anthropi) protein is Acetyl-coenzyme A carboxylase carboxyl transferase subunit beta.